Reading from the N-terminus, the 627-residue chain is DNA-directed RNA polymerase subunit gamma (627 aa).

Zn(2+) is bound by residues Cys-70, Cys-72, Cys-85, and Cys-88. Residues Asp-468, Asp-470, and Asp-472 each coordinate Mg(2+).

Belongs to the RNA polymerase beta' chain family. RpoC1 subfamily. In terms of assembly, in cyanobacteria the RNAP catalytic core is composed of 2 alpha, 1 beta, 1 beta', 1 gamma and 1 omega subunit. When a sigma factor is associated with the core the holoenzyme is formed, which can initiate transcription. Mg(2+) serves as cofactor. Zn(2+) is required as a cofactor.

The enzyme catalyses RNA(n) + a ribonucleoside 5'-triphosphate = RNA(n+1) + diphosphate. In terms of biological role, DNA-dependent RNA polymerase catalyzes the transcription of DNA into RNA using the four ribonucleoside triphosphates as substrates. This chain is DNA-directed RNA polymerase subunit gamma, found in Synechococcus sp. (strain JA-3-3Ab) (Cyanobacteria bacterium Yellowstone A-Prime).